Consider the following 213-residue polypeptide: ATP phosphoribosyltransferase (213 aa).

Belongs to the ATP phosphoribosyltransferase family. Short subfamily. In terms of assembly, heteromultimer composed of HisG and HisZ subunits.

Its subcellular location is the cytoplasm. It carries out the reaction 1-(5-phospho-beta-D-ribosyl)-ATP + diphosphate = 5-phospho-alpha-D-ribose 1-diphosphate + ATP. Its pathway is amino-acid biosynthesis; L-histidine biosynthesis; L-histidine from 5-phospho-alpha-D-ribose 1-diphosphate: step 1/9. In terms of biological role, catalyzes the condensation of ATP and 5-phosphoribose 1-diphosphate to form N'-(5'-phosphoribosyl)-ATP (PR-ATP). Has a crucial role in the pathway because the rate of histidine biosynthesis seems to be controlled primarily by regulation of HisG enzymatic activity. This is ATP phosphoribosyltransferase from Listeria monocytogenes serotype 4a (strain HCC23).